We begin with the raw amino-acid sequence, 483 residues long: Spermatogenesis-defective protein 39 homolog (483 aa).

The protein belongs to the SPE39 family. Interacts with vps33b. High levels detected in liver and small intestine of larvae at 5 days post-fertilization.

It is found in the cytoplasm. Its subcellular location is the cytoplasmic vesicle. The protein resides in the early endosome. The protein localises to the recycling endosome. It localises to the late endosome. In terms of biological role, proposed to be involved in endosomal maturation implicating in part vps33b. In epithelial cells, the vps33b:vipas39 complex may play a role in the apical rab11a-dependent recycling pathway and in the maintenance of the apical-basolateral polarity. May play a role in lysosomal trafficking, probably via association with the core HOPS complex in a discrete population of endosomes; the functions seems to be independent of vps33b. May play a role in vesicular trafficking during spermatogenesis. May be involved in direct or indirect transcriptional regulation of E-cadherin. The chain is Spermatogenesis-defective protein 39 homolog (vipas39) from Danio rerio (Zebrafish).